A 349-amino-acid polypeptide reads, in one-letter code: tRNA pseudouridine synthase D (349 aa).

A substrate-binding site is contributed by phenylalanine 27. Aspartate 80 (nucleophile) is an active-site residue. Asparagine 129 provides a ligand contact to substrate. Residues 155 to 303 (GVPNYFGAQR…VEASRRAMLL (149 aa)) form the TRUD domain. A substrate-binding site is contributed by phenylalanine 329.

It belongs to the pseudouridine synthase TruD family.

The catalysed reaction is uridine(13) in tRNA = pseudouridine(13) in tRNA. Responsible for synthesis of pseudouridine from uracil-13 in transfer RNAs. The polypeptide is tRNA pseudouridine synthase D (Salmonella dublin (strain CT_02021853)).